A 435-amino-acid chain; its full sequence is Probable exopolygalacturonase B (435 aa).

Residues Met-1–Ser-15 form the signal peptide. Residues Asn-59, Asn-184, and Asn-224 are each glycosylated (N-linked (GlcNAc...) asparagine). PbH1 repeat units lie at residues Ser-208 to Asn-239, Val-240 to Pro-261, Asn-262 to Ser-283, Ile-294 to Ala-315, and Ile-326 to Gln-347. The active-site Proton donor is Asp-254. Cys-256 and Cys-273 form a disulfide bridge. Asn-262 and Asn-274 each carry an N-linked (GlcNAc...) asparagine glycan. Residue His-277 is part of the active site. N-linked (GlcNAc...) asparagine glycans are attached at residues Asn-301, Asn-328, Asn-365, and Asn-373. The stretch at Val-366–Asp-388 is one PbH1 6 repeat. A disulfide bridge links Cys-391 with Cys-397. An N-linked (GlcNAc...) asparagine glycan is attached at Asn-406.

The protein belongs to the glycosyl hydrolase 28 family.

The protein resides in the secreted. It catalyses the reaction [(1-&gt;4)-alpha-D-galacturonosyl](n) + H2O = alpha-D-galacturonate + [(1-&gt;4)-alpha-D-galacturonosyl](n-1). Functionally, specific in hydrolyzing the terminal glycosidic bond of polygalacturonic acid and oligogalacturonates. The chain is Probable exopolygalacturonase B (pgxB) from Aspergillus flavus (strain ATCC 200026 / FGSC A1120 / IAM 13836 / NRRL 3357 / JCM 12722 / SRRC 167).